A 244-amino-acid chain; its full sequence is DNA polymerase sliding clamp (244 aa).

The protein belongs to the PCNA family. Homotrimer. The subunits circularize to form a toroid; DNA passes through its center. Replication factor C (RFC) is required to load the toroid on the DNA.

Functionally, sliding clamp subunit that acts as a moving platform for DNA processing. Responsible for tethering the catalytic subunit of DNA polymerase to DNA during high-speed replication. In conjunction with replication factor C (RFC) stimulates DNA synthesis by PolB, relieving inhibition by replication protein A (RPA). The protein is DNA polymerase sliding clamp of Methanothermobacter thermautotrophicus (strain ATCC 29096 / DSM 1053 / JCM 10044 / NBRC 100330 / Delta H) (Methanobacterium thermoautotrophicum).